A 634-amino-acid polypeptide reads, in one-letter code: Knob-associated histidine-rich protein (634 aa).

A signal peptide spans 1–34 (MKSFKNKNTLRRKKAFPVFTKILLVSFLVWVLKC). Asn42 carries an N-linked (GlcNAc...) asparagine glycan. A compositionally biased stretch (basic residues) spans 57–87 (AQKQHEHHHHHHHQHQHQHQAPHQAHHHHHH). Disordered stretches follow at residues 57–143 (AQKQ…QVFR) and 347–634 (SSVN…GCCG). Low complexity predominate over residues 95–104 (PQVHQQVHGQ). Basic residues predominate over residues 108-117 (HHHHHHHHHQ). 2 stretches are compositionally biased toward basic and acidic residues: residues 354–375 (KHGD…EGEK) and 396–405 (KDNEDAESVK). The segment covering 406–422 (SKKHKSHDCEKKKSKKH) has biased composition (basic residues). Composition is skewed to basic and acidic residues over residues 423-444 (KDNE…GEKH) and 453-493 (KTNE…KKVD). Polar residues predominate over residues 494–505 (STSADNKSTNAA). The span at 509-520 (AKDKTQGGKTDK) shows a compositional bias: basic and acidic residues. 4 tandem repeats follow at residues 540–549 (TKGATKEAST), 550–559 (SKEATKEAST), 560–569 (SKGATKEAST), and 570–579 (TEGATKGAST). Positions 540–580 (TKGATKEASTSKEATKEASTSKGATKEASTTEGATKGASTT) are 4 X 10 AA tandem repeats of [TS]-[KE]-[GE]-A-T-K-[EG]-A-S-T. Positions 567 to 591 (ASTTEGATKGASTTAGSTTGATTGA) are enriched in low complexity. The segment covering 605–620 (AANNGEQVMSRGQAQL) has biased composition (polar residues). The span at 625 to 634 (KKKKKRGCCG) shows a compositional bias: basic residues.

The protein resides in the secreted. In terms of biological role, KAHRP might mimick human histidine-rich glycoproteins to anchor host thrombospondin or a parasite analog in a binding complex with the endothelial cell receptor. In Plasmodium falciparum (isolate FCR-3 / Gambia), this protein is Knob-associated histidine-rich protein.